A 258-amino-acid polypeptide reads, in one-letter code: Phosphate import ATP-binding protein PstB (258 aa).

In terms of domain architecture, ABC transporter spans 5 to 247 (IDISGLSAFY…ERIFSNPSVQ (243 aa)). 37–44 (GPSGCGKS) is a binding site for ATP.

It belongs to the ABC transporter superfamily. Phosphate importer (TC 3.A.1.7) family. In terms of assembly, the complex is composed of two ATP-binding proteins (PstB), two transmembrane proteins (PstC and PstA) and a solute-binding protein (PstS).

It is found in the cell membrane. It catalyses the reaction phosphate(out) + ATP + H2O = ADP + 2 phosphate(in) + H(+). Its function is as follows. Part of the ABC transporter complex PstSACB involved in phosphate import. Responsible for energy coupling to the transport system. This Streptomyces griseus protein is Phosphate import ATP-binding protein PstB.